Reading from the N-terminus, the 281-residue chain is MNIVHTIKDVKSIIKKWKDENLSIGYVPTMGYLHEGHASLIKKAREENDKVIVSIFVNPIQFGPKEDYSTYPRDLDKDSSLCEKFGADLVFNPETSEMYPNKIYSHVNVDILTENLCGEKRPVHFQGVCTVLTKFFNILNPTKAYFGEKDAQQLTVVKKMVEDLNFPIEIIGCPIIREEDGLAKSSRNAYLNKQERKSALILNKSLKEALKSLKSGEKDLNIIKNIIINTIMKEPLAKIDYISIVDSTTLQPVEKLQSSILIAIAVYIGKTRLIDNFTFKL.

ATP is bound at residue 30–37 (MGYLHEGH). His-37 (proton donor) is an active-site residue. Residue Gln-61 participates in (R)-pantoate binding. Residue Gln-61 coordinates beta-alanine. Residue 147–150 (GEKD) coordinates ATP. (R)-pantoate is bound at residue Gln-153. ATP is bound by residues Ile-176 and 184–187 (KSSR).

It belongs to the pantothenate synthetase family. In terms of assembly, homodimer.

It localises to the cytoplasm. It carries out the reaction (R)-pantoate + beta-alanine + ATP = (R)-pantothenate + AMP + diphosphate + H(+). It participates in cofactor biosynthesis; (R)-pantothenate biosynthesis; (R)-pantothenate from (R)-pantoate and beta-alanine: step 1/1. Functionally, catalyzes the condensation of pantoate with beta-alanine in an ATP-dependent reaction via a pantoyl-adenylate intermediate. The sequence is that of Pantothenate synthetase from Clostridium botulinum (strain Loch Maree / Type A3).